The primary structure comprises 150 residues: Glycine/sarcosine/betaine reductase complex component A (150 aa).

Sec-43 is an active-site residue. Sec-43 is a non-standard amino acid (selenocysteine).

It belongs to the GrdA family. In terms of assembly, monomer. Component of the glycine, sarcosine and betaine reductase complexes, together with components B and C.

The catalysed reaction is acetyl phosphate + [thioredoxin]-disulfide + NH4(+) + H2O = [thioredoxin]-dithiol + glycine + phosphate + H(+). It catalyses the reaction acetyl phosphate + methylamine + [thioredoxin]-disulfide + H2O = sarcosine + [thioredoxin]-dithiol + phosphate + H(+). It carries out the reaction acetyl phosphate + trimethylamine + [thioredoxin]-disulfide + H2O = glycine betaine + [thioredoxin]-dithiol + phosphate + H(+). Functionally, in the first step of glycine, betaine and sarcosine reductases, the substrate is bound to component PB via a Schiff base intermediate. Then the PB-activated substrate is nucleophilically attacked by the selenol anion of component PA to transform it to a carboxymethylated selenoether and the respective amine. By action of component PC, acetyl phosphate is formed, leaving component PA in its oxidized state. Finally component PA becomes reduced by the thioredoxin system to start a new catalytic cycle of reductive deamination. The sequence is that of Glycine/sarcosine/betaine reductase complex component A (grdA) from Gottschalkia purinilytica (Clostridium purinilyticum).